The chain runs to 272 residues: Ribosomal RNA small subunit methyltransferase A (272 aa).

Positions 20, 22, 47, 68, 93, and 114 each coordinate S-adenosyl-L-methionine.

The protein belongs to the class I-like SAM-binding methyltransferase superfamily. rRNA adenine N(6)-methyltransferase family. RsmA subfamily.

The protein resides in the cytoplasm. The catalysed reaction is adenosine(1518)/adenosine(1519) in 16S rRNA + 4 S-adenosyl-L-methionine = N(6)-dimethyladenosine(1518)/N(6)-dimethyladenosine(1519) in 16S rRNA + 4 S-adenosyl-L-homocysteine + 4 H(+). Its function is as follows. Specifically dimethylates two adjacent adenosines (A1518 and A1519) in the loop of a conserved hairpin near the 3'-end of 16S rRNA in the 30S particle. May play a critical role in biogenesis of 30S subunits. The chain is Ribosomal RNA small subunit methyltransferase A from Aliivibrio fischeri (strain ATCC 700601 / ES114) (Vibrio fischeri).